The sequence spans 206 residues: FMN-dependent NADH:quinone oxidoreductase (206 aa).

FMN-binding positions include 15 to 17 (SVS), 94 to 97 (MYNF), and 138 to 141 (TRGG).

Belongs to the azoreductase type 1 family. Homodimer. Requires FMN as cofactor.

The enzyme catalyses 2 a quinone + NADH + H(+) = 2 a 1,4-benzosemiquinone + NAD(+). It catalyses the reaction N,N-dimethyl-1,4-phenylenediamine + anthranilate + 2 NAD(+) = 2-(4-dimethylaminophenyl)diazenylbenzoate + 2 NADH + 2 H(+). Quinone reductase that provides resistance to thiol-specific stress caused by electrophilic quinones. Functionally, also exhibits azoreductase activity. Catalyzes the reductive cleavage of the azo bond in aromatic azo compounds to the corresponding amines. This is FMN-dependent NADH:quinone oxidoreductase from Sinorhizobium medicae (strain WSM419) (Ensifer medicae).